The chain runs to 283 residues: MTKLITTVKEMQHIVKAAKRSGTTIGLIPTMGALHDGHLTMVRESVSTNDITVVSVFVNPLQFGPNEDFDAYPRQIDKDLELVSEVGADIVFHPAVEDMYPGELGIDVKVGPLADVLEGAKRPGHFDGVVTVVNKLFNIVMPDYAYFGKKDAQQLAIVEQMVKDFNHAVEIIGIDIVREADGLAKSSRNVYLTEQERQEAVHLSKSLLLAQALYQDGERQSKVIIDRVTQYLESHISGRIEEVAVYSYPQLVEQHEITGRIFISLAVKFSKARLIDNIIIGAE.

31–38 (MGALHDGH) lines the ATP pocket. His-38 (proton donor) is an active-site residue. Gln-62 contacts (R)-pantoate. Gln-62 is a beta-alanine binding site. 148–151 (GKKD) contacts ATP. Residue Gln-154 coordinates (R)-pantoate. ATP-binding positions include Val-177 and 185–188 (KSSR).

Belongs to the pantothenate synthetase family. As to quaternary structure, homodimer.

The protein resides in the cytoplasm. It catalyses the reaction (R)-pantoate + beta-alanine + ATP = (R)-pantothenate + AMP + diphosphate + H(+). Its pathway is cofactor biosynthesis; (R)-pantothenate biosynthesis; (R)-pantothenate from (R)-pantoate and beta-alanine: step 1/1. In terms of biological role, catalyzes the condensation of pantoate with beta-alanine in an ATP-dependent reaction via a pantoyl-adenylate intermediate. This chain is Pantothenate synthetase, found in Staphylococcus aureus (strain bovine RF122 / ET3-1).